The primary structure comprises 468 residues: Secretogranin-3 (468 aa).

Positions 1–19 are cleaved as a signal peptide; it reads MGFLGTGTWILVLVLPIQA. The interval 23-69 is disordered; the sequence is PGGSQDKSLHNRELSAERPLNEQIAEAEEDKIKKTYPPENKPGQSNY. Basic and acidic residues predominate over residues 29-42; that stretch reads KSLHNRELSAERPL. S37 is subject to Phosphoserine. An O-linked (Xyl...) (chondroitin sulfate) serine glycan is attached at S37. T216 and T231 each carry an O-linked (GalNAc...) threonine glycan. The disordered stretch occupies residues 353 to 406; the sequence is KLFPAPSEKSHEETDSTKEEAAKMEKEYGSLKDSTKDDNSNPGGKTDEPKGKTE. S359 carries an O-linked (GalNAc...) serine glycan. Residues 360 to 406 show a composition bias toward basic and acidic residues; that stretch reads EKSHEETDSTKEEAAKMEKEYGSLKDSTKDDNSNPGGKTDEPKGKTE. The residue at position 362 (S362) is a Phosphoserine.

As to quaternary structure, interacts with CHGA. Interacts with secretogranin II/SCG2. Interacts (via C-terminus) with CPE. Post-translationally, O-glycosylated. In terms of tissue distribution, detected in urine (at protein level). Expressed in brain, heart, kidney, liver and skeletal muscle.

The protein resides in the cytoplasmic vesicle. The protein localises to the secretory vesicle. Its subcellular location is the secretory vesicle membrane. It is found in the secreted. In terms of biological role, member of the granin protein family that regulates the biogenesis of secretory granules. Acts as a sorting receptor for intragranular proteins including chromogranin A/CHGA. May also play a role in angiogenesis. Promotes endothelial proliferation, migration and tube formation through MEK/ERK signaling pathway. The protein is Secretogranin-3 (SCG3) of Homo sapiens (Human).